The chain runs to 316 residues: Prenytransferase adrG (316 aa).

7 helical membrane passes run 36 to 56, 60 to 80, 131 to 151, 163 to 183, 191 to 211, 247 to 267, and 294 to 314; these read LLGFYLNTSPYLVGVAFCASI, KIPITVLLHRTILLSIWSIFL, VLIYLPWPCAVDCLIITFFAL, PQITLVNIGWAIPMAMHSLGL, PTVCMFLFIGLVIIMIDVIYS, GFLAMAGFFTGLGLSFFVVSV, and KSAFFLATLFWLFGFVIEYCL.

The protein belongs to the UbiA prenyltransferase family. The cofactor is Mg(2+).

It localises to the membrane. The enzyme catalyses 3,5-dimethylorsellinate + (2E,6E)-farnesyl diphosphate = (3R)-3-farnesyl-6-hydroxy-2,3,5-trimethyl-4-oxocyclohexa-1,5-diene-1-carboxylate + diphosphate + H(+). Its pathway is secondary metabolite biosynthesis; terpenoid biosynthesis. Functionally, prenytransferase; part of the gene cluster that mediates the biosynthesis of andrastins, meroterpenoid compounds that exhibit inhibitory activity against ras farnesyltransferase, suggesting that they could be promising leads for antitumor agents. The first step of the pathway is the synthesis of 3,5-dimethylorsellinic acid (DMOA) by the polyketide synthase adrD via condensation of one acetyl-CoA starter unit with 3 malonyl-CoA units and 2 methylations. DMAO is then converted to farnesyl-DMAO by the prenyltransferase adrG. The methyltransferase adrK catalyzes the methylation of the carboxyl group of farnesyl-DMAO to farnesyl-DMAO methyl ester which is further converted to epoxyfarnesyl-DMAO methyl ester by the FAD-dependent monooxygenase adrH. The terpene cyclase adrI then catalyzes the carbon skeletal rearrangement to generate the andrastin E, the first compound in the pathway having the andrastin scaffold, with the tetracyclic ring system. The post-cyclization tailoring enzymes adrF, adrE, adrJ, and adrA, are involved in the conversion of andrastin E into andrastin A. The short chain dehydrogenase adrF is responsible for the oxidation of the C-3 a hydroxyl group of andrastin E to yield the corresponding ketone, andrastin D. The ketoreductase adrE stereoselectively reduces the carbonyl moiety to reverse the stereochemistry of the C-3 position to yield andrastin F. The acetyltransferase adrJ is the acetyltransferase that attaches the acetyl group to the C-3 hydroxyl group of andrastin F to yield andrastin C. Finally, the cytochrome P450 monooxygenase adrA catalyzes two sequential oxidation reactions of the C-23 methyl group, to generate the corresponding alcohol andrastin B, and aldehyde andrastin A. The protein is Prenytransferase adrG of Penicillium roqueforti.